Consider the following 517-residue polypeptide: Sterol 14-alpha demethylase CYP51C (517 aa).

Residues 10–30 (TLPLSVSIPLTTSIIIILSIV) form a helical membrane-spanning segment. Tyrosine 115 serves as a coordination point for lanosterol. Glycine 300 lines the itraconazole pocket. Residue cysteine 458 coordinates heme.

This sequence belongs to the cytochrome P450 family. The cofactor is heme.

It localises to the endoplasmic reticulum membrane. The protein operates within steroid metabolism; ergosterol biosynthesis. In terms of biological role, together with cyp51A and cyp51B, encodes the sterol 14alpha-demethylase that plays a critical role in the third module of ergosterol biosynthesis pathway, being ergosterol the major sterol component in fungal membranes that participates in a variety of functions. Cyp51C does not seem to encode an active sterol 14-alpha-demethylase, but can impact indirectly on sterol 14alpha-demethylation, and is required for full virulence on host wheat ears, but not on Arabidopsis floral tissue or the fruits of apple and tomato. The third module or late pathway involves the ergosterol synthesis itself through consecutive reactions that mainly occur in the endoplasmic reticulum (ER) membrane. In filamentous fungi, during the initial step of this module, lanosterol (lanosta-8,24-dien-3beta-ol) can be metabolized to eburicol. Sterol 14alpha-demethylase catalyzes the three-step oxidative removal of the 14alpha-methyl group (C-32) of both these sterols in the form of formate, and converts eburicol and lanosterol to 14-demethyleburicol (4,4,24-trimethylergosta-8,14,24(28)-trienol) and 4,4-dimethyl-5alpha-cholesta-8,14,24-trien-3beta-ol, respectively, which are further metabolized by other enzymes in the pathway to ergosterol. The polypeptide is Sterol 14-alpha demethylase CYP51C (Gibberella zeae (strain ATCC MYA-4620 / CBS 123657 / FGSC 9075 / NRRL 31084 / PH-1) (Wheat head blight fungus)).